The sequence spans 588 residues: D-3-phosphoglycerate dehydrogenase 3, chloroplastic (588 aa).

The N-terminal 38 residues, 1-38, are a transit peptide targeting the chloroplast; the sequence is MATSLNLSSIFSSSSRLVTTPSSVFPIRQRRRIILVTS. Residues 195-196, aspartate 215, 274-276, and aspartate 300 each bind NAD(+); these read KV and VAR. Arginine 276 is an active-site residue. Glutamate 305 is an active-site residue. The active-site Proton donor is histidine 324. 324-327 contacts NAD(+); it reads HLGA. One can recognise an ACT domain in the interval 516–588; sequence VILCRQVDQP…AIEEFVFLKL (73 aa).

This sequence belongs to the D-isomer specific 2-hydroxyacid dehydrogenase family. In terms of tissue distribution, expressed in aerial parts. Not detected in roots and meristematic tissue. Expressed in cotyledons, adult leaves, stigma and anther filaments. Detected in the embryo.

It is found in the plastid. Its subcellular location is the chloroplast. It catalyses the reaction (2R)-3-phosphoglycerate + NAD(+) = 3-phosphooxypyruvate + NADH + H(+). Its pathway is amino-acid biosynthesis; L-serine biosynthesis; L-serine from 3-phospho-D-glycerate: step 1/3. Its activity is regulated as follows. Partially inhibited by 1 mM serine. Functionally, involved in the plastidial phosphorylated pathway of serine biosynthesis (PPSB). The protein is D-3-phosphoglycerate dehydrogenase 3, chloroplastic (PGDH3) of Arabidopsis thaliana (Mouse-ear cress).